The following is a 406-amino-acid chain: Cysteine desulfurase (406 aa).

K226 is subject to N6-(pyridoxal phosphate)lysine. C364 acts as the Cysteine persulfide intermediate in catalysis.

The protein belongs to the class-V pyridoxal-phosphate-dependent aminotransferase family. Csd subfamily. As to quaternary structure, homodimer. Interacts with SufE and the SufBCD complex composed of SufB, SufC and SufD. The interaction with SufE is required to mediate the direct transfer of the sulfur atom from the S-sulfanylcysteine. The cofactor is pyridoxal 5'-phosphate.

The protein resides in the cytoplasm. It catalyses the reaction (sulfur carrier)-H + L-cysteine = (sulfur carrier)-SH + L-alanine. The catalysed reaction is L-selenocysteine + AH2 = hydrogenselenide + L-alanine + A + H(+). It participates in cofactor biosynthesis; iron-sulfur cluster biosynthesis. In terms of biological role, cysteine desulfurases mobilize the sulfur from L-cysteine to yield L-alanine, an essential step in sulfur metabolism for biosynthesis of a variety of sulfur-containing biomolecules. Component of the suf operon, which is activated and required under specific conditions such as oxidative stress and iron limitation. Acts as a potent selenocysteine lyase in vitro, that mobilizes selenium from L-selenocysteine. Selenocysteine lyase activity is however unsure in vivo. This is Cysteine desulfurase from Escherichia coli (strain SE11).